Here is a 190-residue protein sequence, read N- to C-terminus: Inosine triphosphate pyrophosphatase (190 aa).

10–15 contacts ITP; that stretch reads TGNAKK. Position 40 (Glu40) interacts with Mg(2+). Residues Lys52, 68–69, Lys85, 144–147, Lys167, and 172–173 contribute to the ITP site; these read DT, FGWD, and HR.

The protein belongs to the HAM1 NTPase family. Homodimer. Mg(2+) is required as a cofactor. It depends on Mn(2+) as a cofactor.

It localises to the cytoplasm. The enzyme catalyses ITP + H2O = IMP + diphosphate + H(+). The catalysed reaction is dITP + H2O = dIMP + diphosphate + H(+). It carries out the reaction XTP + H2O = XMP + diphosphate + H(+). Functionally, pyrophosphatase that hydrolyzes non-canonical purine nucleotides such as inosine triphosphate (ITP), deoxyinosine triphosphate (dITP) or xanthosine 5'-triphosphate (XTP) to their respective monophosphate derivatives. The enzyme does not distinguish between the deoxy- and ribose forms. Probably excludes non-canonical purines from RNA and DNA precursor pools, thus preventing their incorporation into RNA and DNA and avoiding chromosomal lesions. This chain is Inosine triphosphate pyrophosphatase, found in Culex quinquefasciatus (Southern house mosquito).